We begin with the raw amino-acid sequence, 115 residues long: Protein translation factor SUI1 homolog (115 aa).

It belongs to the SUI1 family.

In terms of biological role, probably involved in translation. This is Protein translation factor SUI1 homolog from Sporobolus stapfianus (Ressurection grass).